A 510-amino-acid chain; its full sequence is Lysine--tRNA ligase (510 aa).

Mg(2+) is bound by residues Glu-420 and Glu-427.

The protein belongs to the class-II aminoacyl-tRNA synthetase family. Homodimer. It depends on Mg(2+) as a cofactor.

It localises to the cytoplasm. The enzyme catalyses tRNA(Lys) + L-lysine + ATP = L-lysyl-tRNA(Lys) + AMP + diphosphate. The protein is Lysine--tRNA ligase (lysS) of Vibrio cholerae serotype O1 (strain ATCC 39315 / El Tor Inaba N16961).